A 548-amino-acid chain; its full sequence is Chaperonin GroEL (548 aa).

ATP-binding positions include 30–33 (TLGP), K51, 87–91 (DGTTT), G415, 479–481 (NAA), and D495.

The protein belongs to the chaperonin (HSP60) family. In terms of assembly, forms a cylinder of 14 subunits composed of two heptameric rings stacked back-to-back. Interacts with the co-chaperonin GroES.

The protein localises to the cytoplasm. It carries out the reaction ATP + H2O + a folded polypeptide = ADP + phosphate + an unfolded polypeptide.. Functionally, together with its co-chaperonin GroES, plays an essential role in assisting protein folding. The GroEL-GroES system forms a nano-cage that allows encapsulation of the non-native substrate proteins and provides a physical environment optimized to promote and accelerate protein folding. In Oleidesulfovibrio alaskensis (strain ATCC BAA-1058 / DSM 17464 / G20) (Desulfovibrio alaskensis), this protein is Chaperonin GroEL.